The sequence spans 627 residues: Membrane protein insertase YidC (627 aa).

Transmembrane regions (helical) follow at residues 3-23 (KNTVIGLVLIGLVIFGFSWLN), 376-396 (WGLIILLLTLGIKLLISPLAY), 450-470 (LPMLLQFPFLIAMYMYFPTTI), 502-522 (FYGNHVSLFCLLMSISNILYI), 534-554 (EGMAMLKWMPYITTVMFLFFF), and 558-578 (ASGLCYYYFLSSIITVIQYMS).

The protein belongs to the OXA1/ALB3/YidC family. Type 1 subfamily. Interacts with the Sec translocase complex via SecD. Specifically interacts with transmembrane segments of nascent integral membrane proteins during membrane integration.

The protein localises to the cell inner membrane. In terms of biological role, required for the insertion and/or proper folding and/or complex formation of integral membrane proteins into the membrane. Involved in integration of membrane proteins that insert both dependently and independently of the Sec translocase complex, as well as at least some lipoproteins. Aids folding of multispanning membrane proteins. This Porphyromonas gingivalis (strain ATCC BAA-308 / W83) protein is Membrane protein insertase YidC.